Reading from the N-terminus, the 360-residue chain is Phospho-N-acetylmuramoyl-pentapeptide-transferase (360 aa).

10 consecutive transmembrane segments (helical) span residues 24 to 44 (RAVM…PWTI), 69 to 89 (GTPT…TLLW), 92 to 112 (WANP…ALGF), 133 to 153 (MVWQ…LAAN), 158 to 178 (ILIV…GFLV), 199 to 219 (GLAA…AYVS), 239 to 259 (VAIF…FNAY), 263 to 283 (VFMG…VAVI), 288 to 308 (FVLV…MLQV), and 337 to 357 (QVVV…LSTL).

Belongs to the glycosyltransferase 4 family. MraY subfamily. It depends on Mg(2+) as a cofactor.

The protein localises to the cell inner membrane. The enzyme catalyses UDP-N-acetyl-alpha-D-muramoyl-L-alanyl-gamma-D-glutamyl-meso-2,6-diaminopimeloyl-D-alanyl-D-alanine + di-trans,octa-cis-undecaprenyl phosphate = di-trans,octa-cis-undecaprenyl diphospho-N-acetyl-alpha-D-muramoyl-L-alanyl-D-glutamyl-meso-2,6-diaminopimeloyl-D-alanyl-D-alanine + UMP. Its pathway is cell wall biogenesis; peptidoglycan biosynthesis. In terms of biological role, catalyzes the initial step of the lipid cycle reactions in the biosynthesis of the cell wall peptidoglycan: transfers peptidoglycan precursor phospho-MurNAc-pentapeptide from UDP-MurNAc-pentapeptide onto the lipid carrier undecaprenyl phosphate, yielding undecaprenyl-pyrophosphoryl-MurNAc-pentapeptide, known as lipid I. The chain is Phospho-N-acetylmuramoyl-pentapeptide-transferase from Neisseria gonorrhoeae (strain ATCC 700825 / FA 1090).